Here is a 397-residue protein sequence, read N- to C-terminus: Natural killer cell receptor 2B4 (397 aa).

The signal sequence occupies residues 1 to 19; it reads MLGQAVLFTTFLLLRAHQG. Topologically, residues 20–226 are extracellular; it reads QDCPDSSEEV…SVPSNFRFLP (207 aa). An intrachain disulfide couples cysteine 22 to cysteine 119. 2 Ig-like domains span residues 22-129 and 131-215; these read CPDS…LILD and VETP…THGC. Residues asparagine 78, asparagine 145, asparagine 161, asparagine 178, asparagine 197, asparagine 206, and asparagine 210 are each glycosylated (N-linked (GlcNAc...) asparagine). Cysteines 154 and 196 form a disulfide. A helical membrane pass occupies residues 227 to 247; the sequence is FGVIIVILVTLFLGAIICFCV. At 248–397 the chain is on the cytoplasmic side; sequence WTKKRKQLQF…RELENFDVYS (150 aa). The ITSM 1 motif lies at 264-269; sequence TIYEYV. Tyrosine 266 carries the phosphotyrosine modification. Residues 277-290 show a composition bias toward polar residues; that stretch reads DQQGCSRASGSPSA. The tract at residues 277–300 is disordered; the sequence is DQQGCSRASGSPSAVQEDGRGQRE. Short sequence motifs (ITSM) lie at residues 323–328, 342–347, and 367–372; these read TMYSMI, TVYSVV, and TVYEEV. Residue tyrosine 325 is modified to Phosphotyrosine; by FYN. A Phosphotyrosine modification is found at tyrosine 344. The residue at position 369 (tyrosine 369) is a Phosphotyrosine; by FYN.

In terms of assembly, interacts with CD48. Interacts (via phosphorylated ITSM 1-4) with SH2D1A/SAP (via SH2 domain); SH2D1A probably mediates association with FYN. Interacts (via phosphorylated ITSM 3) with PTPN11/SHP-2, INPP5D/SHIP1, PTPN6/SHP-1 and CSK; binding of SH2D1A prevents association with PTPN11, PTPN6 and CSK. Interacts weakly (via phosphorylated ITSM 2) with PTPN11 and CSK. Interacts with SH2D1B and SH2D1B2. Interacts with MHC class I proteins; the interaction is proposed to prevent self-killing of NK cells. N-linked glycosylation is essential for the binding to its ligand CD48. Also O-glycosylated, in contrast, O-linked sialylation has a negative impact on ligand binding. Post-translationally, phosphorylated by FYN and CSK on tyrosine residues following activation. Coligation with inhibitory receptors such as KIR2DL1 inhibits phosphorylation upon contact of NK cells with sensitive target cells. In terms of tissue distribution, expressed in natural killer (NK) cells, T cells and dendritic cells.

It localises to the membrane. The protein localises to the cell membrane. It is found in the membrane raft. Functionally, heterophilic receptor of the signaling lymphocytic activation molecule (SLAM) family; its ligand is CD48. SLAM receptors triggered by homo- or heterotypic cell-cell interactions are modulating the activation and differentiation of a wide variety of immune cells and thus are involved in the regulation and interconnection of both innate and adaptive immune response. Activities are controlled by presence or absence of small cytoplasmic adapter proteins, SH2D1A/SAP and/or SH2D1B/EAT-2. Acts as activating natural killer (NK) cell receptor. Activating function implicates association with SH2D1A and FYN. Downstreaming signaling involves predominantly VAV1, and, to a lesser degree, INPP5D/SHIP1 and CBL. Signal attenuation in the absence of SH2D1A is proposed to be dependent on INPP5D and to a lesser extent PTPN6/SHP-1 and PTPN11/SHP-2. Stimulates NK cell cytotoxicity, production of IFN-gamma and granule exocytosis. Optimal expansion and activation of NK cells seems to be dependent on the engagement of CD244 with CD48 expressed on neighboring NK cells. Regulation of NK cell activity by adapters Sh2d1b and Sh2d1b2 is reported conflictingly. Acts as costimulator in NK activation by enhancing signals by other NK receptors such as NCR3 and NCR1. At early stages of NK cell differentiation may function as an inhibitory receptor possibly ensuring the self-tolerance of developing NK cells. Involved in the regulation of CD8(+) T-cell proliferation; expression on activated T-cells and binding to CD48 provides costimulatory-like function for neighboring T-cells. Inhibits inflammatory responses in dendritic cells (DCs). In Mus musculus (Mouse), this protein is Natural killer cell receptor 2B4 (Cd244).